The primary structure comprises 508 residues: UBX domain-containing protein 4 (508 aa).

The segment at 1-200 (MLWFQGAIPA…PTEDLTVRVE (200 aa)) is interaction with UBQLN1. Over 1-413 (MLWFQGAIPA…VHSSSGDFWT (413 aa)) the chain is Cytoplasmic. The interval 117 to 199 (GEASLANGSQ…RPTEDLTVRV (83 aa)) is disordered. The segment covering 122–190 (ANGSQSEGSV…QEPSGCSNQR (69 aa)) has biased composition (polar residues). The UBX domain maps to 315-393 (ERSTVARIQF…ELAPSASVVL (79 aa)). The stretch at 414-434 (LLGTVLYPFLAIWRLISNFLF) is an intramembrane region. Topologically, residues 435 to 508 (SNPPPAQTSV…TWNGNSTQQM (74 aa)) are cytoplasmic. Residues 450-459 (ETSNLASSSN) show a composition bias toward polar residues. The tract at residues 450–508 (ETSNLASSSNSEKREPVRKRVLEKRGEDFKKEGKIYRLRTQDDGEDENNTWNGNSTQQM) is disordered. Residues 460-491 (SEKREPVRKRVLEKRGEDFKKEGKIYRLRTQD) show a composition bias toward basic and acidic residues. Threonine 489 carries the phosphothreonine modification. Over residues 498–508 (NTWNGNSTQQM) the composition is skewed to polar residues.

Directly interacts with VCP. Interacts with UBQLN1. Forms a complex with VCP and UBQLN1.

It localises to the endoplasmic reticulum membrane. The protein resides in the nucleus envelope. Involved in endoplasmic reticulum-associated protein degradation (ERAD). Acts as a platform to recruit both UBQLN1 and VCP to the ER during ERAD. In Bos taurus (Bovine), this protein is UBX domain-containing protein 4 (UBXN4).